The sequence spans 590 residues: Aspartate--tRNA ligase (590 aa).

L-aspartate is bound at residue Glu172. Residues 196–199 (QLFK) form an aspartate region. Arg218 provides a ligand contact to L-aspartate. ATP is bound by residues 218–220 (RDE) and Gln227. His449 serves as a coordination point for L-aspartate. Glu483 provides a ligand contact to ATP. Residue Arg490 coordinates L-aspartate. 535 to 538 (GLDR) contributes to the ATP binding site.

It belongs to the class-II aminoacyl-tRNA synthetase family. Type 1 subfamily. As to quaternary structure, homodimer.

The protein localises to the cytoplasm. It carries out the reaction tRNA(Asp) + L-aspartate + ATP = L-aspartyl-tRNA(Asp) + AMP + diphosphate. Functionally, catalyzes the attachment of L-aspartate to tRNA(Asp) in a two-step reaction: L-aspartate is first activated by ATP to form Asp-AMP and then transferred to the acceptor end of tRNA(Asp). This is Aspartate--tRNA ligase from Glaesserella parasuis serovar 5 (strain SH0165) (Haemophilus parasuis).